Consider the following 108-residue polypeptide: MMIKQCVICLSLLVFGTTAAHAEETPLVTARHMSKWEEIAVKEAKKRYPLAQVLFKQKVWDRKRKDEAVKQYHLTLREGSKEFGVFVTISFDPYSQKVNKIAILEEYQ.

An N-terminal signal peptide occupies residues 1 to 22 (MMIKQCVICLSLLVFGTTAAHA).

This is an uncharacterized protein from Bacillus subtilis (strain 168).